Consider the following 410-residue polypeptide: Arginine deiminase (410 aa).

The Amidino-cysteine intermediate role is filled by Cys-400.

The protein belongs to the arginine deiminase family.

The protein localises to the cytoplasm. The enzyme catalyses L-arginine + H2O = L-citrulline + NH4(+). Its pathway is amino-acid degradation; L-arginine degradation via ADI pathway; carbamoyl phosphate from L-arginine: step 1/2. The sequence is that of Arginine deiminase from Bacillus thuringiensis subsp. konkukian (strain 97-27).